Consider the following 126-residue polypeptide: Aspartate 1-decarboxylase (126 aa).

Catalysis depends on S25, which acts as the Schiff-base intermediate with substrate; via pyruvic acid. S25 carries the pyruvic acid (Ser) modification. T57 is a substrate binding site. Catalysis depends on Y58, which acts as the Proton donor. A substrate-binding site is contributed by G73–A75.

It belongs to the PanD family. In terms of assembly, heterooctamer of four alpha and four beta subunits. The cofactor is pyruvate. Post-translationally, is synthesized initially as an inactive proenzyme, which is activated by self-cleavage at a specific serine bond to produce a beta-subunit with a hydroxyl group at its C-terminus and an alpha-subunit with a pyruvoyl group at its N-terminus.

The protein localises to the cytoplasm. The catalysed reaction is L-aspartate + H(+) = beta-alanine + CO2. Its pathway is cofactor biosynthesis; (R)-pantothenate biosynthesis; beta-alanine from L-aspartate: step 1/1. Catalyzes the pyruvoyl-dependent decarboxylation of aspartate to produce beta-alanine. This chain is Aspartate 1-decarboxylase, found in Salmonella arizonae (strain ATCC BAA-731 / CDC346-86 / RSK2980).